The chain runs to 152 residues: Mitochondrial holo-[acyl-carrier-protein] synthase (152 aa).

The protein belongs to the P-Pant transferase superfamily. AcpS family.

It is found in the mitochondrion. The catalysed reaction is apo-[ACP] + CoA = holo-[ACP] + adenosine 3',5'-bisphosphate + H(+). Functionally, transfers the 4'-phosphopantetheine moiety from coenzyme A to a Ser of mitochondrial acyl-carrier-protein. The protein is Mitochondrial holo-[acyl-carrier-protein] synthase (PPT2) of Candida glabrata (strain ATCC 2001 / BCRC 20586 / JCM 3761 / NBRC 0622 / NRRL Y-65 / CBS 138) (Yeast).